Here is a 501-residue protein sequence, read N- to C-terminus: Dynein regulatory complex subunit 5 (501 aa).

Over residues 1–23 (MQDTVTTSALLDPSHSSVSTQDN) the composition is skewed to polar residues. Disordered regions lie at residues 1–56 (MQDT…HPRA) and 202–222 (LPAQ…EMEE). The segment covering 24–34 (SSTGGHTSSTS) has biased composition (low complexity). LRR repeat units follow at residues 308–321 (VLEE…LIGD), 335–355 (RLRV…QSLA), 363–383 (NLIS…QALA), 391–411 (CLTT…TLLS), and 419–439 (TLTS…KQLL).

It belongs to the DRC5 family. Component of the nexin-dynein regulatory complex (N-DRC). Interacts with DRC1. Interacts with FBXL13/DRC6, DRC3 and DRC7.

The protein localises to the cell projection. It is found in the cilium. The protein resides in the flagellum. It localises to the cytoplasm. Its subcellular location is the cytoskeleton. The protein localises to the flagellum axoneme. Its function is as follows. Component of the nexin-dynein regulatory complex (N-DRC) a key regulator of ciliary/flagellar motility which maintains the alignment and integrity of the distal axoneme and regulates microtubule sliding in motile axonemes. May play a role in the assembly of N-DRC. May be required for sperm motility. This chain is Dynein regulatory complex subunit 5 (TCTE1), found in Homo sapiens (Human).